A 429-amino-acid polypeptide reads, in one-letter code: Z-DNA-binding protein 1 (429 aa).

Z-binding domains lie at 8 to 70 (PGRE…CLGG) and 103 to 166 (PQFS…TIYR). The segment at 68–107 (LGGTDPEGEGPAELALSSPAERPQQHAATIPETPGPQFSQ) is disordered. Short sequence motifs (RIP homotypic interaction motif (RHIM)) lie at residues 195 to 219 (NSWISIANSEAIQIGHGNIITRQTV) and 253 to 277 (DIHMEQSILRRVQLGHSNEMRLHGV). Disordered stretches follow at residues 277 to 299 (VPSEGPAHIPPGSPPVSATAAGP) and 339 to 429 (KMSI…GGGI). The segment covering 347–358 (AGPGGVAGSGEG) has biased composition (gly residues). Residues 407 to 420 (KAAEGSHYVDEASH) show a composition bias toward basic and acidic residues.

Homodimer. Interacts (via RIP homotypic interaction motif) with RIPK3; leading to RIPK3 activation and necroptosis; interaction is enhanced by CASP6. Interacts (via RIP homotypic interaction motif) with RIPK1. Component of the AIM2 PANoptosome complex, a multiprotein complex that drives inflammatory cell death (PANoptosis). As to quaternary structure, (Microbial infection) Interacts (via RIP homotypic interaction motif/RHIM) with herpes simplex virus 1/HHV-1 protein RIR1/ICP6 (via RHIM); this interaction may induce heteromeric amyloid assemblies and prevent necroptosis activation. Interacts with human herpes simplex virus 1/HHV-1 protein ICP0. Phosphorylated. As to expression, highly expressed in lymphatic tissues including lymph node, leukocytes, tonsil, bone marrow and spleen. Expressed to a lesser extent in thymus, lung and liver.

It is found in the cytoplasm. The protein localises to the nucleus. With respect to regulation, ZBP1-dependent necroptosis is normally inhibited by RIPK1: RIPK1 inhibits the ZBP1-induced activation of RIPK3 via FADD-mediated recruitment of CASP8, which cleaves RIPK1 and limits TNF-induced necroptosis. Functionally, key innate sensor that recognizes and binds Z-RNA structures, which are produced by a number of viruses, such as herpesvirus, orthomyxovirus or flavivirus, and triggers different forms of cell death. ZBP1 acts as an essential mediator of pyroptosis, necroptosis and apoptosis (PANoptosis), an integral part of host defense against pathogens, by activating RIPK3, caspase-8 (CASP8), and the NLRP3 inflammasome. Key activator of necroptosis, a programmed cell death process in response to death-inducing TNF-alpha family members, via its ability to bind Z-RNA: once activated upon Z-RNA-binding, ZBP1 interacts and stimulates RIPK3 kinase, which phosphorylates and activates MLKL, triggering execution of programmed necrosis. In addition to TNF-induced necroptosis, necroptosis can also take place in the nucleus in response to orthomyxoviruses infection: ZBP1 recognizes and binds Z-RNA structures that are produced in infected nuclei by orthomyxoviruses, such as the influenza A virus (IAV), leading to ZBP1 activation, RIPK3 stimulation and subsequent MLKL phosphorylation, triggering disruption of the nuclear envelope and leakage of cellular DNA into the cytosol. ZBP1-dependent cell death in response to IAV infection promotes interleukin-1 alpha (IL1A) induction in an NLRP3-inflammasome-independent manner: IL1A expression is required for the optimal interleukin-1 beta (IL1B) production, and together, these cytokines promote infiltration of inflammatory neutrophils to the lung, leading to the formation of neutrophil extracellular traps. In addition to its direct role in driving necroptosis via its ability to sense Z-RNAs, also involved in PANoptosis triggered in response to bacterial infection: component of the AIM2 PANoptosome complex, a multiprotein complex that triggers PANoptosis. Also acts as the apical sensor of fungal infection responsible for activating PANoptosis. Involved in CASP8-mediated cell death via its interaction with RIPK1 but independently of its ability to sense Z-RNAs. In some cell types, also able to restrict viral replication by promoting cell death-independent responses. In response to Zika virus infection in neurons, promotes a cell death-independent pathway that restricts viral replication: together with RIPK3, promotes a death-independent transcriptional program that modifies the cellular metabolism via up-regulation expression of the enzyme ACOD1/IRG1 and production of the metabolite itaconate. Itaconate inhibits the activity of succinate dehydrogenase, generating a metabolic state in neurons that suppresses replication of viral genomes. In terms of biological role, (Microbial infection) In case of herpes simplex virus 1/HHV-1 infection, forms hetero-amyloid structures with HHV-1 protein RIR1/ICP6 which may inhibit ZBP1-mediated necroptosis, thereby preventing host cell death pathway and allowing viral evasion. The polypeptide is Z-DNA-binding protein 1 (Homo sapiens (Human)).